The following is a 242-amino-acid chain: 1-(5-phosphoribosyl)-5-[(5-phosphoribosylamino)methylideneamino] imidazole-4-carboxamide isomerase (242 aa).

Asp-10 functions as the Proton acceptor in the catalytic mechanism. The active-site Proton donor is the Asp-132.

The protein belongs to the HisA/HisF family.

It localises to the cytoplasm. It catalyses the reaction 1-(5-phospho-beta-D-ribosyl)-5-[(5-phospho-beta-D-ribosylamino)methylideneamino]imidazole-4-carboxamide = 5-[(5-phospho-1-deoxy-D-ribulos-1-ylimino)methylamino]-1-(5-phospho-beta-D-ribosyl)imidazole-4-carboxamide. Its pathway is amino-acid biosynthesis; L-histidine biosynthesis; L-histidine from 5-phospho-alpha-D-ribose 1-diphosphate: step 4/9. In Methanopyrus kandleri (strain AV19 / DSM 6324 / JCM 9639 / NBRC 100938), this protein is 1-(5-phosphoribosyl)-5-[(5-phosphoribosylamino)methylideneamino] imidazole-4-carboxamide isomerase.